The sequence spans 413 residues: NPL4-like protein 2 (413 aa).

Phosphoserine is present on S104. One can recognise an MPN domain in the interval 131–272; the sequence is SVSFDRDAAN…ADVHFEAFQM (142 aa).

The protein belongs to the NPL4 family.

It participates in protein degradation; proteasomal ubiquitin-dependent pathway. Functionally, may be part of a complex that binds ubiquitinated proteins and that is necessary for the export of misfolded proteins from the ER to the cytoplasm, where they are degraded by the proteasome. In Arabidopsis thaliana (Mouse-ear cress), this protein is NPL4-like protein 2.